The chain runs to 414 residues: Multifunctional CCA protein (414 aa).

Gly-8 and Arg-11 together coordinate ATP. Residues Gly-8 and Arg-11 each coordinate CTP. Residues Asp-21 and Asp-23 each contribute to the Mg(2+) site. Positions 91, 137, and 140 each coordinate ATP. CTP contacts are provided by Arg-91, Arg-137, and Arg-140. The HD domain occupies 228–329 (TGIHTLMTLA…LKLFDAVDVW (102 aa)).

Belongs to the tRNA nucleotidyltransferase/poly(A) polymerase family. Bacterial CCA-adding enzyme type 1 subfamily. In terms of assembly, monomer. Can also form homodimers and oligomers. It depends on Mg(2+) as a cofactor. Requires Ni(2+) as cofactor.

The catalysed reaction is a tRNA precursor + 2 CTP + ATP = a tRNA with a 3' CCA end + 3 diphosphate. It carries out the reaction a tRNA with a 3' CCA end + 2 CTP + ATP = a tRNA with a 3' CCACCA end + 3 diphosphate. Functionally, catalyzes the addition and repair of the essential 3'-terminal CCA sequence in tRNAs without using a nucleic acid template. Adds these three nucleotides in the order of C, C, and A to the tRNA nucleotide-73, using CTP and ATP as substrates and producing inorganic pyrophosphate. tRNA 3'-terminal CCA addition is required both for tRNA processing and repair. Also involved in tRNA surveillance by mediating tandem CCA addition to generate a CCACCA at the 3' terminus of unstable tRNAs. While stable tRNAs receive only 3'-terminal CCA, unstable tRNAs are marked with CCACCA and rapidly degraded. The sequence is that of Multifunctional CCA protein from Serratia proteamaculans (strain 568).